The primary structure comprises 159 residues: G-protein-signaling modulator 3 (159 aa).

The segment at 1–54 is disordered; that stretch reads MEAERPQEEDGEQSLPQDDQGWPPVNATARPWRSAPPSPPPPGTRHTALGPRSG. Ser34, Ser38, Ser55, and Ser58 each carry phosphoserine. A compositionally biased stretch (pro residues) spans 34 to 43; it reads SAPPSPPPPG. At Thr61 the chain carries Phosphothreonine. Positions 61 to 83 constitute a GoLoco 1 domain; sequence TELLLDLVAEAQSRRLEEQRATF. The segment at 77-97 is disordered; sequence EEQRATFHTPEAPPNLAPAPP. A compositionally biased stretch (pro residues) spans 87-97; the sequence is EAPPNLAPAPP. GoLoco domains are found at residues 103–125 and 131–154; these read KEQL…RSDP and GQEL…RSRP.

Its subcellular location is the cytoplasm. Functionally, interacts with subunit of G(i) alpha proteins and regulates the activation of G(i) alpha proteins. This Mus musculus (Mouse) protein is G-protein-signaling modulator 3 (Gpsm3).